A 1727-amino-acid polypeptide reads, in one-letter code: Nucleoporin alm1 (1727 aa).

7 coiled-coil regions span residues 57–361 (QEVN…KNTS), 443–463 (NFLS…QAEL), 542–740 (IKEA…AEEL), 804–1106 (AARK…INES), 1223–1427 (GERS…QLNK), 1497–1555 (NEEE…AESA), and 1601–1664 (QKEW…KKDS). A compositionally biased stretch (polar residues) spans 1423 to 1448 (EQLNKPSATPTATTQSEPSTVSLEEF). 3 disordered regions span residues 1423–1459 (EQLN…SSTQ), 1477–1500 (EKVR…NEEE), and 1656–1727 (LEQS…KKAK). 2 stretches are compositionally biased toward polar residues: residues 1672 to 1684 (ASKN…SNSE) and 1702 to 1714 (VDTN…SSSD). Position 1706 is a phosphoserine (Ser-1706).

It localises to the nucleus. The protein resides in the nuclear pore complex. The protein localises to the nucleus envelope. Its function is as follows. Maintains the proteasome and its anchor cut8 at the nucleus envelope and is required for kinetochore component proteostasis. Proper kinetochore stoichiometry ensures the correct attachment of kinetochores to spindle microtubules during cytokinesis. Required for the localization of spindle assembly checkpoint (SAC) protein mad2 and bub1 to the nucleus envelope during interphase, but not their localization during mitosis. The protein is Nucleoporin alm1 of Schizosaccharomyces pombe (strain 972 / ATCC 24843) (Fission yeast).